The following is a 90-amino-acid chain: LYR motif-containing protein 2 (90 aa).

The N-terminal 19 residues, 1–19 (MASSRLPASALTLKQFIQR), are a transit peptide targeting the mitochondrion.

The protein belongs to the complex I LYR family.

It is found in the mitochondrion. Its function is as follows. Involved in efficient integration of the N-module into mitochondrial respiratory chain complex I. This is LYR motif-containing protein 2 (lyrm2) from Salmo salar (Atlantic salmon).